A 175-amino-acid chain; its full sequence is 3-hydroxydecanoyl-[acyl-carrier-protein] dehydratase (175 aa).

Histidine 71 is a catalytic residue.

It belongs to the thioester dehydratase family. FabA subfamily. In terms of assembly, homodimer.

The protein resides in the cytoplasm. The catalysed reaction is a (3R)-hydroxyacyl-[ACP] = a (2E)-enoyl-[ACP] + H2O. The enzyme catalyses (3R)-hydroxydecanoyl-[ACP] = (2E)-decenoyl-[ACP] + H2O. It catalyses the reaction (2E)-decenoyl-[ACP] = (3Z)-decenoyl-[ACP]. It participates in lipid metabolism; fatty acid biosynthesis. Its function is as follows. Necessary for the introduction of cis unsaturation into fatty acids. Catalyzes the dehydration of (3R)-3-hydroxydecanoyl-ACP to E-(2)-decenoyl-ACP and then its isomerization to Z-(3)-decenoyl-ACP. Can catalyze the dehydratase reaction for beta-hydroxyacyl-ACPs with saturated chain lengths up to 16:0, being most active on intermediate chain length. In Rhodopseudomonas palustris (strain ATCC BAA-98 / CGA009), this protein is 3-hydroxydecanoyl-[acyl-carrier-protein] dehydratase.